A 47-amino-acid chain; its full sequence is Bacteriocin curvaticin DN317 (47 aa).

It belongs to the bacteriocin class IIA/YGNGV family.

It is found in the secreted. Has bactericidal activity against various Gram-negative Campylobacter, and the Gram-positive L.monocytogenes and B.subtilis. In vitro, inhibits C.jejuni strain ATCC 33560 (MIC=27.3 ug/ml). The chain is Bacteriocin curvaticin DN317 from Latilactobacillus curvatus (Lactobacillus curvatus).